The following is a 330-amino-acid chain: MKTAYIAKQRQISFVKSHFSRQLEERLGLIEVQAPILSRVGDGTQDNLSGCEKAVQVKVKALPDAQFEVVHSLAKWKRQTLGQHDFSAGEGLYTHMKALRPDEDRLSPLHSVYVDQWDWERVMGDGERQLSTLKSTVEAIWAGIKATEAAVNEEFGLAPFLPDQIHFVHSQELLSRYPDLDAKGRERAIAKDLGAVFLVGIGGKLSDGHRHDVRAPDYDDWSTPSELGHAGLNGDILVWNPVLEDAFELSSMGIRVDADTLKHQLALTGDEDRLQLEWHQALLRGEMPQTIGGGIGQSRLTMLLLQLPHIGQVQCGVWPAAVRESVPSLL.

It belongs to the class-II aminoacyl-tRNA synthetase family. AsnA subfamily.

It localises to the cytoplasm. It carries out the reaction L-aspartate + NH4(+) + ATP = L-asparagine + AMP + diphosphate + H(+). It functions in the pathway amino-acid biosynthesis; L-asparagine biosynthesis; L-asparagine from L-aspartate (ammonia route): step 1/1. This is Aspartate--ammonia ligase from Shigella flexneri serotype 5b (strain 8401).